A 288-amino-acid polypeptide reads, in one-letter code: Acetyl-coenzyme A carboxylase carboxyl transferase subunit beta (288 aa).

The region spanning 34–288 (LFAKCPACKH…HLVSFHGGGQ (255 aa)) is the CoA carboxyltransferase N-terminal domain. Zn(2+)-binding residues include Cys-38, Cys-41, Cys-56, and Cys-59. The C4-type zinc-finger motif lies at 38-59 (CPACKHMIYKKDLGLAKICPTC).

The protein belongs to the AccD/PCCB family. Acetyl-CoA carboxylase is a heterohexamer composed of biotin carboxyl carrier protein (AccB), biotin carboxylase (AccC) and two subunits each of ACCase subunit alpha (AccA) and ACCase subunit beta (AccD). The cofactor is Zn(2+).

The protein resides in the cytoplasm. The catalysed reaction is N(6)-carboxybiotinyl-L-lysyl-[protein] + acetyl-CoA = N(6)-biotinyl-L-lysyl-[protein] + malonyl-CoA. The protein operates within lipid metabolism; malonyl-CoA biosynthesis; malonyl-CoA from acetyl-CoA: step 1/1. Functionally, component of the acetyl coenzyme A carboxylase (ACC) complex. Biotin carboxylase (BC) catalyzes the carboxylation of biotin on its carrier protein (BCCP) and then the CO(2) group is transferred by the transcarboxylase to acetyl-CoA to form malonyl-CoA. The chain is Acetyl-coenzyme A carboxylase carboxyl transferase subunit beta from Streptococcus pyogenes serotype M49 (strain NZ131).